A 311-amino-acid polypeptide reads, in one-letter code: Beta-ketoacyl-[acyl-carrier-protein] synthase III (311 aa).

Catalysis depends on residues Cys114 and His238. Positions 239–243 are ACP-binding; sequence QANIR. The active site involves Asn268.

It belongs to the thiolase-like superfamily. FabH family. As to quaternary structure, homodimer.

It is found in the cytoplasm. The enzyme catalyses malonyl-[ACP] + acetyl-CoA + H(+) = 3-oxobutanoyl-[ACP] + CO2 + CoA. The protein operates within lipid metabolism; fatty acid biosynthesis. Its function is as follows. Catalyzes the condensation reaction of fatty acid synthesis by the addition to an acyl acceptor of two carbons from malonyl-ACP. Catalyzes the first condensation reaction which initiates fatty acid synthesis and may therefore play a role in governing the total rate of fatty acid production. Possesses both acetoacetyl-ACP synthase and acetyl transacylase activities. Its substrate specificity determines the biosynthesis of branched-chain and/or straight-chain of fatty acids. In Neorickettsia sennetsu (strain ATCC VR-367 / Miyayama) (Ehrlichia sennetsu), this protein is Beta-ketoacyl-[acyl-carrier-protein] synthase III.